A 161-amino-acid polypeptide reads, in one-letter code: Protein lin-52 (161 aa).

Residues 137–161 (TGSASPRYLQPTPPKNVAEETTGSQ) are disordered.

The protein belongs to the lin-52 family. As to quaternary structure, component of the DRM complex, at least composed of lin-9, lin-35, lin-37, lin-52, lin-53, lin-54- dpl-1 and efl-1. Interacts with zft-11; the interaction is required to suppress the activation of non-neuronal genes in neurons.

It localises to the nucleus. Functionally, synthetic multivulva class B (synMuvB) protein. SynMuvB proteins are required to repress the induction of vulval development by Ras signaling and probably act by forming the multiprotein DRM complex that represses transcription. In association with the zinc finger protein ztf-11, negatively regulates the expression of non-neuronal genes during neurogenesis. The protein is Protein lin-52 of Caenorhabditis elegans.